Reading from the N-terminus, the 60-residue chain is MAEDSVAILIVEDDNDAYPSFGTLPASHAQYGFRLLRGIFLITLVIWTVVWLKLLRDALL.

The chain crosses the membrane as a helical span at residues 33 to 55; sequence FRLLRGIFLITLVIWTVVWLKLL.

This sequence belongs to the HHV-5 UL2 protein family.

The protein resides in the host membrane. This is an uncharacterized protein from Human cytomegalovirus (strain AD169) (HHV-5).